A 486-amino-acid polypeptide reads, in one-letter code: PTS system N-acetylmuramic acid-specific EIIBC component (486 aa).

One can recognise a PTS EIIB type-1 domain in the interval 1 to 89; sequence MAKITQTMIS…NKLIESVING (89 aa). The active-site Phosphocysteine intermediate; for EIIB activity is the Cys-28. Residues 127 to 486 form the PTS EIIC type-1 domain; sequence SKFATIFTPL…FFGSKDVDLS (360 aa). 10 consecutive transmembrane segments (helical) span residues 129 to 149, 170 to 190, 196 to 216, 230 to 250, 268 to 288, 312 to 332, 347 to 367, 381 to 401, 411 to 431, and 453 to 473; these read FATIFTPLIPGFIAAGLLLGF, LIAYMKVFGKGLFAFLSILIG, AFGGSGVNGAILASLFVLGYN, FFGYTIDPRGNIIGVLLAAII, MILTSVVTLLIMGVVTFVVIM, AAILAGLFLISVVFGIHQGFV, LFPILAMAGGGQVGASLALYF, GAIIPGILGIGEPLIYGVTLP, IGGAAGGFFIGLVSYLGLPVG, and IFAGMAVFVVGLLISYVVGFL.

The protein resides in the cell inner membrane. It catalyses the reaction N-acetyl-beta-D-muramate(out) + N(pros)-phospho-L-histidyl-[protein] = N-acetyl-beta-D-muramate 6-phosphate(in) + L-histidyl-[protein]. Functionally, the phosphoenolpyruvate-dependent sugar phosphotransferase system (sugar PTS), a major carbohydrate active transport system, catalyzes the phosphorylation of incoming sugar substrates concomitantly with their translocation across the cell membrane. This system is involved in N-acetylmuramic acid (MurNAc) transport, yielding cytoplasmic MurNAc-6-P. Is also able to take up anhydro-N-acetylmuramic acid (anhMurNAc), but cannot phosphorylate the carbon 6, probably because of the 1,6-anhydro ring. This chain is PTS system N-acetylmuramic acid-specific EIIBC component (murP), found in Vibrio vulnificus (strain YJ016).